We begin with the raw amino-acid sequence, 368 residues long: Carbamoyl phosphate synthase small chain (368 aa).

Residues 1 to 178 form a CPSase region; the sequence is MKAVLGLEDG…GAECAWKGSG (178 aa). Residues S45, G230, and G232 each contribute to the L-glutamine site. The Glutamine amidotransferase type-1 domain occupies 182–368; that stretch reads HAVVVDLGIK…KVVKVLGGDL (187 aa). C257 serves as the catalytic Nucleophile. F258, Q261, N299, G301, and Y302 together coordinate L-glutamine. Catalysis depends on residues H342 and E344.

The protein belongs to the CarA family. As to quaternary structure, composed of two chains; the small (or glutamine) chain promotes the hydrolysis of glutamine to ammonia, which is used by the large (or ammonia) chain to synthesize carbamoyl phosphate. Tetramer of heterodimers (alpha,beta)4.

It catalyses the reaction hydrogencarbonate + L-glutamine + 2 ATP + H2O = carbamoyl phosphate + L-glutamate + 2 ADP + phosphate + 2 H(+). The enzyme catalyses L-glutamine + H2O = L-glutamate + NH4(+). It participates in amino-acid biosynthesis; L-arginine biosynthesis; carbamoyl phosphate from bicarbonate: step 1/1. Its pathway is pyrimidine metabolism; UMP biosynthesis via de novo pathway; (S)-dihydroorotate from bicarbonate: step 1/3. Its function is as follows. Small subunit of the glutamine-dependent carbamoyl phosphate synthetase (CPSase). CPSase catalyzes the formation of carbamoyl phosphate from the ammonia moiety of glutamine, carbonate, and phosphate donated by ATP, constituting the first step of 2 biosynthetic pathways, one leading to arginine and/or urea and the other to pyrimidine nucleotides. The small subunit (glutamine amidotransferase) binds and cleaves glutamine to supply the large subunit with the substrate ammonia. The polypeptide is Carbamoyl phosphate synthase small chain (Methanosarcina acetivorans (strain ATCC 35395 / DSM 2834 / JCM 12185 / C2A)).